The chain runs to 132 residues: Prefoldin subunit alpha (132 aa).

Belongs to the prefoldin subunit alpha family. Heterohexamer of two alpha and four beta subunits.

Its subcellular location is the cytoplasm. Its function is as follows. Molecular chaperone capable of stabilizing a range of proteins. Seems to fulfill an ATP-independent, HSP70-like function in archaeal de novo protein folding. In Pyrobaculum aerophilum (strain ATCC 51768 / DSM 7523 / JCM 9630 / CIP 104966 / NBRC 100827 / IM2), this protein is Prefoldin subunit alpha (pfdA).